The primary structure comprises 509 residues: MGTGKKEATRRAKGGETGNGFGNIRVKGVNFYRDAKKVKKLSMYKEGRAKHNARGEEVQAATFQSKEIPNARIDPNRRWFGNTRVIAQDALNHFREALGETKRDSYQVLLRQNKLPMSLLEENNKIPQVKVVETESYANTFGPKAQRKKPQLAVGDFAELASAADESQQDFEAKKEEDNSWKVDGWSQEAKEAIFHKGQSKRIWNELYKVIDSSDVVIHVLDARDPLGTRCTSVEQYIKKEAPHKHLIFVLNKCDLVPTWVAAAWVKHLSQDYPTLAFHASITNSFGKGSLIQLLRQYSALHPDRQQISVGFIGYPNTGKSSIINTLRKKKVCKTAPIPGETKVWQYITLMKRIFLIDCPGIVPPSQKDSETDILFRGVVRVEHVSYPEQYIPALLERCETKHLERTYEVSGWSNATEFLEKIARKHGRLLKGGEPDESGIAKLILNDFNRGKIPWFVPPPQAEDMENVKFAAGEGRLGEMKKREIHEAPAATETAEETKEEEFKGFDD.

The segment covering 1-14 (MGTGKKEATRRAKG) has biased composition (basic and acidic residues). The interval 1 to 22 (MGTGKKEATRRAKGGETGNGFG) is disordered. Positions 204–365 (WNELYKVIDS…LIDCPGIVPP (162 aa)) constitute a CP-type G domain. GTP is bound by residues 314–321 (GYPNTGKS) and 358–362 (DCPGI). Positions 480–509 (EMKKREIHEAPAATETAEETKEEEFKGFDD) are disordered.

It belongs to the TRAFAC class YlqF/YawG GTPase family. NOG2 subfamily.

Its subcellular location is the nucleus. The protein localises to the nucleolus. GTPase that associates with pre-60S ribosomal subunits in the nucleolus and is required for their nuclear export and maturation. This is Nucleolar GTP-binding protein 2 (NOG2) from Yarrowia lipolytica (strain CLIB 122 / E 150) (Yeast).